Consider the following 794-residue polypeptide: Hyaluronan mediated motility receptor (794 aa).

The disordered stretch occupies residues 1–87 (MSFPKAPLKR…SQKNDKDVKR (87 aa)). S20 bears the Phosphoserine mark. Residues 74–87 (SKKDSQKNDKDVKR) show a composition bias toward basic and acidic residues. N-linked (GlcNAc...) asparagine glycosylation is found at N134, N279, N446, N467, N488, N509, N530, N561, and N601. The interval 365–630 (EEMTSEKNVF…ITDLKNQLRQ (266 aa)) is required for interaction with FAM83D. 5 consecutive repeat copies span residues 442-462 (QEKY…LESV), 463-483 (QEKY…LESE), 484-504 (QEKY…LESE), 505-525 (QEKY…LESV), and 526-546 (QEKY…LESY). Residues 442 to 546 (QEKYNDTAQS…RDVTAQLESY (105 aa)) are 5 X 21 AA tandem repeats. Hyaluronic acid-binding stretches follow at residues 719–729 (KQKIKHVVKLK) and 741–750 (KLRSQLVKRK). A Phosphothreonine modification is found at T784.

In terms of assembly, interacts with ANKRD26. Interacts with DYNLL1. Interacts with FAM83D/CHICA. As to expression, ubiquitously expressed.

The protein resides in the cell surface. It is found in the cytoplasm. The protein localises to the cytoskeleton. It localises to the spindle. Functionally, receptor for hyaluronic acid (HA). Involved in cell motility. When hyaluronan binds to HMMR, the phosphorylation of a number of proteins, including the PTK2/FAK1 occurs. May also be involved in cellular transformation and metastasis formation, and in regulating extracellular-regulated kinase (ERK) activity. May act as a regulator of adipogenesis. This is Hyaluronan mediated motility receptor (Hmmr) from Mus musculus (Mouse).